Consider the following 500-residue polypeptide: Glutamate--tRNA ligase (500 aa).

Residues 12–22 (PSPTGHLHIGN) carry the 'HIGH' region motif. The short motif at 259-263 (KLSKR) is the 'KMSKS' region element. K262 provides a ligand contact to ATP.

It belongs to the class-I aminoacyl-tRNA synthetase family. Glutamate--tRNA ligase type 1 subfamily. In terms of assembly, monomer.

The protein resides in the cytoplasm. The catalysed reaction is tRNA(Glu) + L-glutamate + ATP = L-glutamyl-tRNA(Glu) + AMP + diphosphate. Catalyzes the attachment of glutamate to tRNA(Glu) in a two-step reaction: glutamate is first activated by ATP to form Glu-AMP and then transferred to the acceptor end of tRNA(Glu). The sequence is that of Glutamate--tRNA ligase from Lactobacillus delbrueckii subsp. bulgaricus.